A 129-amino-acid chain; its full sequence is UPF0325 protein HCH_00487 (129 aa).

It belongs to the UPF0325 family.

In Hahella chejuensis (strain KCTC 2396), this protein is UPF0325 protein HCH_00487.